A 310-amino-acid chain; its full sequence is HPr kinase/phosphorylase (310 aa).

Residues His138 and Lys159 contribute to the active site. 153–160 (GGSGVGKS) is a binding site for ATP. Ser160 lines the Mg(2+) pocket. Asp177 acts as the Proton acceptor; for phosphorylation activity. Proton donor; for dephosphorylation activity in catalysis. The segment at 201–210 (LEIRGLGIIN) is important for the catalytic mechanism of both phosphorylation and dephosphorylation. Glu202 is a binding site for Mg(2+). Arg243 is a catalytic residue. The important for the catalytic mechanism of dephosphorylation stretch occupies residues 264–269 (PVRPGR).

The protein belongs to the HPrK/P family. In terms of assembly, homohexamer. It depends on Mg(2+) as a cofactor.

It catalyses the reaction [HPr protein]-L-serine + ATP = [HPr protein]-O-phospho-L-serine + ADP + H(+). It carries out the reaction [HPr protein]-O-phospho-L-serine + phosphate + H(+) = [HPr protein]-L-serine + diphosphate. Its function is as follows. Catalyzes the ATP- as well as the pyrophosphate-dependent phosphorylation of a specific serine residue in HPr, a phosphocarrier protein of the phosphoenolpyruvate-dependent sugar phosphotransferase system (PTS). HprK/P also catalyzes the pyrophosphate-producing, inorganic phosphate-dependent dephosphorylation (phosphorolysis) of seryl-phosphorylated HPr (P-Ser-HPr). The two antagonistic activities of HprK/P are regulated by several intracellular metabolites, which change their concentration in response to the absence or presence of rapidly metabolisable carbon sources (glucose, fructose, etc.) in the growth medium. Also phosphorylates/dephosphorylates the HPr-like catabolite repression protein crh on a specific serine residue. Therefore, by controlling the phosphorylation state of HPr and crh, HPrK/P is a sensor enzyme that plays a major role in the regulation of carbon metabolism and sugar transport: it mediates carbon catabolite repression (CCR), and regulates PTS-catalyzed carbohydrate uptake and inducer exclusion. The sequence is that of HPr kinase/phosphorylase from Shouchella clausii (strain KSM-K16) (Alkalihalobacillus clausii).